The primary structure comprises 335 residues: F420-dependent glucose-6-phosphate dehydrogenase (335 aa).

Residue D40 coordinates coenzyme F420-(gamma-Glu)n. H41 functions as the Proton donor in the catalytic mechanism. Coenzyme F420-(gamma-Glu)n contacts are provided by residues T77 and 108–109 (TG). E110 acts as the Proton acceptor in catalysis. Residues N113, 177-178 (GG), and 180-181 (VV) contribute to the coenzyme F420-(gamma-Glu)n site. Substrate-binding residues include T195, K198, K259, and R283.

Belongs to the F420-dependent glucose-6-phosphate dehydrogenase family. As to quaternary structure, homodimer.

It carries out the reaction oxidized coenzyme F420-(gamma-L-Glu)(n) + D-glucose 6-phosphate + H(+) = 6-phospho-D-glucono-1,5-lactone + reduced coenzyme F420-(gamma-L-Glu)(n). Functionally, catalyzes the coenzyme F420-dependent oxidation of glucose 6-phosphate (G6P) to 6-phosphogluconolactone. The chain is F420-dependent glucose-6-phosphate dehydrogenase from Segniliparus rotundus (strain ATCC BAA-972 / CDC 1076 / CIP 108378 / DSM 44985 / JCM 13578).